The following is an 87-amino-acid chain: Small ribosomal subunit protein bS20 (87 aa).

Residues 1–21 (MANHKSAEKRARQTIKKTERN) are disordered.

This sequence belongs to the bacterial ribosomal protein bS20 family.

Binds directly to 16S ribosomal RNA. The polypeptide is Small ribosomal subunit protein bS20 (Campylobacter jejuni subsp. jejuni serotype O:23/36 (strain 81-176)).